The chain runs to 165 residues: Pyruvoyl-dependent arginine decarboxylase 1 (165 aa).

The residue at position 45 (S45) is a Pyruvic acid (Ser).

This sequence belongs to the PdaD family. The cofactor is pyruvate.

It carries out the reaction L-arginine + H(+) = agmatine + CO2. The protein is Pyruvoyl-dependent arginine decarboxylase 1 (pdaD1) of Methanosarcina mazei (strain ATCC BAA-159 / DSM 3647 / Goe1 / Go1 / JCM 11833 / OCM 88) (Methanosarcina frisia).